Consider the following 302-residue polypeptide: Probable protein S-acyltransferase 13 (302 aa).

Transmembrane regions (helical) follow at residues Ser-17–Val-37 and Val-56–Val-76. The region spanning Arg-116 to Phe-166 is the DHHC domain. Cys-146 acts as the S-palmitoyl cysteine intermediate in catalysis. 2 consecutive transmembrane segments (helical) span residues Phe-166–Phe-186 and Ser-204–Met-224.

It belongs to the DHHC palmitoyltransferase family.

The protein localises to the cell membrane. Its subcellular location is the cytoplasmic vesicle membrane. The catalysed reaction is L-cysteinyl-[protein] + hexadecanoyl-CoA = S-hexadecanoyl-L-cysteinyl-[protein] + CoA. Functionally, palmitoyl acyltransferase. In Arabidopsis thaliana (Mouse-ear cress), this protein is Probable protein S-acyltransferase 13 (PAT13).